The following is a 290-amino-acid chain: Pantothenate synthetase (290 aa).

Met34–His41 lines the ATP pocket. The active-site Proton donor is His41. Gln65 contacts (R)-pantoate. Gln65 contacts beta-alanine. Gly156–Asp159 is a binding site for ATP. Gln162 lines the (R)-pantoate pocket. ATP-binding positions include Ala185 and Leu193–Arg196.

It belongs to the pantothenate synthetase family. Homodimer.

Its subcellular location is the cytoplasm. It catalyses the reaction (R)-pantoate + beta-alanine + ATP = (R)-pantothenate + AMP + diphosphate + H(+). It functions in the pathway cofactor biosynthesis; (R)-pantothenate biosynthesis; (R)-pantothenate from (R)-pantoate and beta-alanine: step 1/1. Functionally, catalyzes the condensation of pantoate with beta-alanine in an ATP-dependent reaction via a pantoyl-adenylate intermediate. The sequence is that of Pantothenate synthetase from Acidovorax ebreus (strain TPSY) (Diaphorobacter sp. (strain TPSY)).